Consider the following 847-residue polypeptide: Putative membrane protein SCO5905 (847 aa).

Helical transmembrane passes span 18–38 (AVVV…APAL), 187–207 (GGDK…LLAI), 215–235 (LVPL…GAIL), 248–268 (ASIM…IITA), 302–322 (IVLA…GFGP), 326–346 (LGVA…VLLL), 381–401 (VKVA…LLGY), 539–559 (DTTL…VLLL), 562–582 (LLAP…TLGA), 600–620 (VTAY…IFIM), 643–663 (TGGV…VLMT), and 672–692 (FGFA…PLLV). Residues 708 to 729 (RPGTPQTPSTPTSEPPSADAPA) form a disordered region. Transmembrane regions (helical) follow at residues 744 to 764 (FTWI…GMYL), 778 to 798 (FGTL…LVAI), and 808 to 828 (TIFA…EIWA).

The protein belongs to the resistance-nodulation-cell division (RND) (TC 2.A.6) family. MmpL subfamily.

The protein resides in the cell membrane. The sequence is that of Putative membrane protein SCO5905 from Streptomyces coelicolor (strain ATCC BAA-471 / A3(2) / M145).